Consider the following 482-residue polypeptide: Zinc finger protein 223 (482 aa).

Positions 8-78 (VTFKDVAVVF…DIATQREGNS (71 aa)) constitute a KRAB domain. 5 C2H2-type zinc fingers span residues 176–198 (HSCD…QRVH), 204–226 (FKCD…QRVH), 232–254 (FKCE…CKLH), 260–282 (YNCE…QRIH), and 288–310 (FKCE…CVVH). The segment at 316–338 (NSTGEYGKGFIRRLDLCKHQTIH) adopts a C2H2-type 6; degenerate zinc-finger fold. 3 consecutive C2H2-type zinc fingers follow at residues 344-366 (YNCK…QRVH), 372-394 (YKCD…HRAH), and 400-422 (YNCD…KRLH). Residues 428–450 (FKCEDCGKKLVYRSYRKDQQKNH) form a C2H2-type 10; degenerate zinc finger.

This sequence belongs to the krueppel C2H2-type zinc-finger protein family.

The protein localises to the nucleus. May be involved in transcriptional regulation. In Homo sapiens (Human), this protein is Zinc finger protein 223 (ZNF223).